The following is a 1214-amino-acid chain: Protein argonaute-2 (1214 aa).

The disordered stretch occupies residues 1–412 (MGKKDKNKKG…GSIKRGTIGK (412 aa)). 2 stretches are compositionally biased toward low complexity: residues 18-93 (PQPQ…QQKS) and 107-117 (KQQVQGWTKQG). Composition is skewed to gly residues over residues 118 to 131 (QQGGHQQGRQGQDG), 141 to 154 (QQGGHQQGRQGQEG), 164 to 177 (QQGGHQQGRQGQEG), 187 to 200 (QQGGHQQGRQGQEG), 210 to 223 (QQGGHQQGRQGQEG), 233 to 246 (QQGGHQQGRQGQEG), and 256 to 269 (QQGGHQQGRQGQEG). Residues 270–282 (GYQQRPPGQQQGG) are compositionally biased toward low complexity. Composition is skewed to gly residues over residues 302–315 (QQGGHQQGRQGQEG), 325–338 (QQGGHQQGRQGQEG), and 348–361 (QQGGHQQGRQGQEG). Residues 362–394 (GYQQRPPGQQPNQTQSQGQYQSRGPPQQQQAAP) show a composition bias toward low complexity. Positions 608-717 (LERFSLKAKI…LPIELCSIEE (110 aa)) constitute a PAZ domain. Positions 681 to 686 (YFHSRN) are interaction with guide RNA. The Piwi domain occupies 885-1186 (LAIVIIPQFR…ARGRVYLTGT (302 aa)). D965 and D1037 together coordinate a divalent metal cation. 3 interaction with guide RNA regions span residues 1075 to 1076 (KR), 1119 to 1127 (HQAIQGTAK), and 1156 to 1178 (FPRCNRSVSYPAPAYLAHLVAAR). A divalent metal cation is bound at residue H1173.

The protein belongs to the argonaute family. Ago subfamily. Interacts with Fmr1, Dcr-1 and vig to form the RNA-induced silencing complex (RISC), a ribonucleoprotein (RNP) complex involved in translation regulation, other components of the complex are RpL5, RpL11 and Rm62. As part of the RISC complex, interacts with Tudor-SN. Interacts with Taf11. In terms of assembly, (Microbial infection) Interacts with cricket paralysis virus protein 1A; this interaction may block the RISC activity. Mg(2+) serves as cofactor. It depends on Mn(2+) as a cofactor.

It is found in the nucleus. It localises to the cytoplasm. The protein resides in the cytoplasmic ribonucleoprotein granule. Essential for RNA interference (RNAi); double-stranded RNA induces potent and specific gene silencing. RNAi is mediated by the RNA-induced silencing complex (RISC), a sequence-specific, multicomponent nuclease that destroys or silences messenger RNAs homologous to the silencing trigger. The chain is Protein argonaute-2 from Drosophila melanogaster (Fruit fly).